The following is a 454-amino-acid chain: Phosphoglucosamine mutase (454 aa).

Ser-102 acts as the Phosphoserine intermediate in catalysis. Mg(2+) contacts are provided by Ser-102, Asp-247, Asp-249, and Asp-251. Phosphoserine is present on Ser-102.

It belongs to the phosphohexose mutase family. It depends on Mg(2+) as a cofactor. Activated by phosphorylation.

The catalysed reaction is alpha-D-glucosamine 1-phosphate = D-glucosamine 6-phosphate. Catalyzes the conversion of glucosamine-6-phosphate to glucosamine-1-phosphate. This Kineococcus radiotolerans (strain ATCC BAA-149 / DSM 14245 / SRS30216) protein is Phosphoglucosamine mutase.